A 312-amino-acid chain; its full sequence is MAKISILFMGTPEFALPSLEILVRNGYPIAAVVTQPDRPKGRGKQLVAPPVKIAATSYQIPVLQPPGIKDPAFLEILEKISPDLIVVAAFGQILPKTVLDFPPLGCINVHPSLLPRYRGAAPINWTLIHGETRTGVTIMYMDEGLDTGDILLQEETPIPPEENFGILHDRLSNLGADLLLRAVRLLEAHQAPRNPQEDSLSSYAPMLKKEDGLIRWSEEVSTIANRIRGLSPAPGAYTFLNGKTLKIFAAAGIEQSVPGQPGEVGKLTDQGLQVTAGNGYVVLQDVQMENRKRMNVSDFLRGHKLSTGTVLG.

Position 112–115 (112–115 (SLLP)) interacts with (6S)-5,6,7,8-tetrahydrofolate.

This sequence belongs to the Fmt family.

It carries out the reaction L-methionyl-tRNA(fMet) + (6R)-10-formyltetrahydrofolate = N-formyl-L-methionyl-tRNA(fMet) + (6S)-5,6,7,8-tetrahydrofolate + H(+). Attaches a formyl group to the free amino group of methionyl-tRNA(fMet). The formyl group appears to play a dual role in the initiator identity of N-formylmethionyl-tRNA by promoting its recognition by IF2 and preventing the misappropriation of this tRNA by the elongation apparatus. The sequence is that of Methionyl-tRNA formyltransferase from Syntrophus aciditrophicus (strain SB).